We begin with the raw amino-acid sequence, 68 residues long: Large ribosomal subunit protein bL33c (68 aa).

The protein belongs to the bacterial ribosomal protein bL33 family.

Its subcellular location is the plastid. The protein resides in the chloroplast. This Pinus koraiensis (Korean pine) protein is Large ribosomal subunit protein bL33c.